A 611-amino-acid polypeptide reads, in one-letter code: MPEVVDTCSLASPATVCRTKHLHLRCSVDFTRRALTGVAALTIQSQEDNLRSLILDTKDLTIEKVVINGQEVKYALGEKQSYKGSPMEISLPIALSKNQEVVIEISFETSPKSSALQWLTPEQTSGKEHPYLFSQCQAIHCRAFLPCQDTPSVKLTYTAEVSVPKELVALMSAIRDGEAPDPADPSRKIYKFSQKVPIPCYLIALVVGALESRKIGPRTLVWSEKEQVDKSAYEFSETESMLKIAEDLGGPYVWGQYDRLVLPPSFSYGGMENPCLTFVTPTLLAGDKSLSNVIAHEISHTWTGNLVTNKTWDHFWLNEGHTVYLERHICGRLFGEKFRHFHALGGWGELQNTVKTLGETQAFTKLVVDLTDTDPDVAYSSVPYEKGFALLFHLEQLLGGPEVFLGFLKAYVEKFSYKSITTDDWKNFLFSHFKDKVDILNQVDWDAWLYSPGLPPIKPNYDMTLTNACIALSQRWITAKEKDLNTFSATDLKDLSSHQVNEFLAQVLQRAPLPLGHVKRMQEVYNCNAINNSEIRFRWLRLCIQSKWEEAIPLALKMATEQGRMKFTRPLFKDLAAFDKSHDQAIQTYHAHKASMHPVTAMLVGKDLKVE.

N6-acetyllysine is present on Lys-73. A peptide-binding positions include 135-137 and 267-272; these read QCQ and SYGGME. His-296 serves as a coordination point for Zn(2+). Residue Glu-297 is the Proton acceptor of the active site. Zn(2+)-binding residues include His-300 and Glu-319. Lys-337 is modified (N6-acetyllysine). Tyr-384 serves as the catalytic Proton donor. Lys-414 carries the post-translational modification N6-acetyllysine. Ser-416 is subject to Phosphoserine. 564-566 is an a peptide binding site; sequence RMK. Lys-573 carries the post-translational modification N6-acetyllysine.

Belongs to the peptidase M1 family. As to quaternary structure, monomer. Requires Zn(2+) as cofactor. Phosphorylation at Ser-416 inhibits leukotriene-A4 hydrolase activity. activity.

It localises to the cytoplasm. It catalyses the reaction leukotriene A4 + H2O = leukotriene B4. The catalysed reaction is (5S,6S)-epoxy-(18R)-hydroxy-(7E,9E,11Z,14Z,16E)-eicosapentaenoate + H2O = resolvin E1. The enzyme catalyses (5S,6S)-epoxy-(18S)-hydroxy-(7E,9E,11Z,14Z,16E)-eicosapentaenoate + H2O = 18S-resolvin E1. It carries out the reaction Release of the N-terminal residue from a tripeptide.. It functions in the pathway lipid metabolism; leukotriene B4 biosynthesis. With respect to regulation, inhibited by bestatin. The epoxide hydrolase activity is restrained by suicide inactivation that involves binding of LTA4 to Tyr-379. 4-(4-benzylphenyl)thiazol-2-amine (ARM1) selectively inhibits the epoxide hydrolase activity. Its function is as follows. Bifunctional zinc metalloenzyme that comprises both epoxide hydrolase (EH) and aminopeptidase activities. Acts as an epoxide hydrolase to catalyze the conversion of LTA4 to the pro-inflammatory mediator leukotriene B4 (LTB4). Also has aminopeptidase activity, with high affinity for N-terminal arginines of various synthetic tripeptides. In addition to its pro-inflammatory EH activity, may also counteract inflammation by its aminopeptidase activity, which inactivates by cleavage another neutrophil attractant, the tripeptide Pro-Gly-Pro (PGP), a bioactive fragment of collagen generated by the action of matrix metalloproteinase-9 (MMP9) and prolylendopeptidase (PREPL). Involved also in the biosynthesis of resolvin E1 and 18S-resolvin E1 from eicosapentaenoic acid, two lipid mediators that show potent anti-inflammatory and pro-resolving actions. This Cavia porcellus (Guinea pig) protein is Leukotriene A-4 hydrolase (LTA4H).